We begin with the raw amino-acid sequence, 464 residues long: IAA-amino acid hydrolase ILR1-like 6 (464 aa).

Residues 1-24 form the signal peptide; sequence MDNLRKLNLLSVSLTIIFVSLTIA. Residues cysteine 175, histidine 177, glutamate 211, histidine 235, and histidine 433 each contribute to the Mn(2+) site.

The protein belongs to the peptidase M20 family.

It catalyses the reaction a jasmonyl-L-amino acid + H2O = a jasmonate + an L-alpha-amino acid. Hydrolyzes certain amino acid conjugates of the plant growth regulator indole-3-acetic acid (IAA). Also hydrolyzes amino acid conjugates of jasmonic acid and 12-hydroxy jasmonic acid. This chain is IAA-amino acid hydrolase ILR1-like 6, found in Arabidopsis thaliana (Mouse-ear cress).